A 368-amino-acid chain; its full sequence is MVSRTLSLSMSLFRAHLVFYRCALNLNSSYNFGFLVAMTFVLQIITGITLAFRYTSEASCAFASVQHLVREVAAGWEFRMLHATTASFVFLCILIHMTRGLYNWSYSYLTTAWMSGLVLYLLTIATAFLGYVLPWGQMSFWGATVITNLLSPIPYLVPWLLGGYYVSDVTLKRFFVLHFILPFIGCIIIVLHIFYLHLNGSSNPAGIDTALKVAFYPHMLMTDAKCLSYLIGLIFLQAAFGLMELSHPDNSIPVNRFVTPLHIVPEWYFLAYYAVLKVIPSKTGGLLVFMSSLINLGLLSEIRALNTRMLIRQQFMTRNVVSGWVIIWVYSMIFLIIIGSAIPQATYILYGRLATILYLTTGLVLCLY.

4 helical membrane passes run 32 to 52, 76 to 98, 112 to 132, and 174 to 194; these read FGFL…TLAF, WEFR…IHMT, AWMS…LGYV, and FFVL…LHIF. Residues His-82 and His-96 each contribute to the heme b site. Heme b-binding residues include His-178 and His-192. Residue His-197 participates in a ubiquinone binding. 4 helical membrane-spanning segments follow: residues 219–239, 285–305, 323–343, and 347–367; these read MLMT…LQAA, GLLV…IRAL, GWVI…SAIP, and YILY…VLCL.

This sequence belongs to the cytochrome b family. As to quaternary structure, the main subunits of complex b-c1 are: cytochrome b, cytochrome c1 and the Rieske protein. Heme b is required as a cofactor.

It localises to the mitochondrion inner membrane. Its function is as follows. Component of the ubiquinol-cytochrome c reductase complex (complex III or cytochrome b-c1 complex) that is part of the mitochondrial respiratory chain. The b-c1 complex mediates electron transfer from ubiquinol to cytochrome c. Contributes to the generation of a proton gradient across the mitochondrial membrane that is then used for ATP synthesis. The polypeptide is Cytochrome b (MT-CYB) (Toxoplasma gondii).